The chain runs to 950 residues: Inactive atromentin synthetase invA4 (950 aa).

The interval 37 to 460 (SRAVSQYPNH…SGRIKDTVVV (424 aa)) is adenylation (A) domain. A Carrier domain is found at 592–670 (APSTETEKTL…TLAKYVDSLV (79 aa)). The interval 597-667 (TEKTLAGIYA…EIITLAKYVD (71 aa)) is thiolation and peptide carrier (T) domain. S629 bears the O-(pantetheine 4'-phosphoryl)serine mark. The segment at 693 to 797 (PIFMVHPGIG…GIIDMIPHHM (105 aa)) is thioesterase (TE) domain.

Belongs to the ATP-dependent AMP-binding enzyme family.

In terms of biological role, inactive atromentin synthetase homolog. Does not accept 4-hydroxyphenylpyruvate (4-HPP) as substrate. In Paxillus involutus (Naked brimcap), this protein is Inactive atromentin synthetase invA4 (invA4).